The following is a 361-amino-acid chain: Cysteine-rich with EGF-like domain protein 2-A (361 aa).

The first 24 residues, 1–24, serve as a signal peptide directing secretion; that stretch reads MNGSRALHLSAWLLLCLLCSAAVA. One can recognise an EGF-like 1 domain in the interval 134-176; that stretch reads DCLACLGGSERPCHGNGFCNGDGTRSGDGLCRCEAEYTGPFCL. 3 disulfides stabilise this stretch: C138–C152, C146–C164, and C166–C175. A glycan (N-linked (GlcNAc...) asparagine) is linked at N188. FU repeat units lie at residues 191 to 238 and 251 to 298; these read YSLC…EESP and SFLC…SEQV. One can recognise an EGF-like 2; calcium-binding domain in the interval 288–329; that stretch reads DVDECDASEQVCSRENETCLNTAGSYKCTCSEGFEDKEGNCV. Disulfide bonds link C292-C306, C299-C315, and C317-C328. N-linked (GlcNAc...) asparagine glycosylation occurs at N303. Positions 341 to 361 are disordered; the sequence is DGEMGTSASDINISNTAHEDL. The segment covering 346–361 has biased composition (polar residues); sequence TSASDINISNTAHEDL. N-linked (GlcNAc...) asparagine glycosylation is present at N352.

It belongs to the CRELD family.

Its subcellular location is the secreted. The protein localises to the endoplasmic reticulum. Possible role in neuronal acetylcholine receptor transport. The protein is Cysteine-rich with EGF-like domain protein 2-A (creld2-a) of Xenopus laevis (African clawed frog).